A 292-amino-acid polypeptide reads, in one-letter code: Ornithine decarboxylase antizyme (292 aa).

Belongs to the ODC antizyme family. Interacts with ODC/SPE1 and thereby sterically blocks ODC homodimerization.

Functionally, ornithine decarboxylase (ODC) antizyme protein that negatively regulates ODC activity and intracellular polyamine biosynthesis in response to increased intracellular polyamine levels. Binds to ODC/SPE1 monomers, inhibiting the assembly of the functional ODC homodimer, and targets the monomers for ubiquitin-independent proteolytic destruction by the 26S proteasome. This Saccharomyces cerevisiae (strain ATCC 204508 / S288c) (Baker's yeast) protein is Ornithine decarboxylase antizyme (OAZ1).